We begin with the raw amino-acid sequence, 718 residues long: Serine/threonine-protein kinase tousled-like 2 (718 aa).

Residues G24–S85 are disordered. Over residues P29–S44 the composition is skewed to polar residues. The span at S46–R61 shows a compositional bias: basic and acidic residues. Phosphoserine occurs at positions 73, 94, 99, and 102. Residues Q147 to T176 are disordered. The tract at residues N193 to E244 is required for interaction with TLK1 and DYNLL1/LC8. Coiled-coil stretches lie at residues N193–E244, A285–P315, and H349–Q397. Residues L310–G337 form a disordered region. The Protein kinase domain occupies Y408–L687. ATP is bound by residues L414–V422 and K437. Catalysis depends on D538, which acts as the Proton acceptor. A Phosphoserine; by CHEK1 modification is found at S696.

This sequence belongs to the protein kinase superfamily. Ser/Thr protein kinase family. In terms of assembly, monomer. May form homodimers; homodimerization may enhance autophosphoylation and enzymatic activity. Heterodimer with TLK1. Interacts with YWHAZ; association with 14-3-3 proteins such as YWHAZ regulates subcellular location. May also interact with FEZ1/LZTS1 and FEZ2. Interacts with CHD7 and CHD8. Interacts with DYNLL1/LC8. It depends on Mg(2+) as a cofactor. Phosphorylated at Ser-696, probably by CHEK1. Post-translationally, autophosphorylated; phosphorylation promotes the assembly of higher order oligomers and enzymatic activity. As to expression, ubiquitously expressed in all tissues examined, with high levels in heart and testis, in particular the pachytene spermatocytes and in round spermatids. Some evidence for the existence of a testis-specific isoform suggesting a role in spermatogenesis.

The protein resides in the nucleus. It is found in the nucleoplasm. Its subcellular location is the cytoplasm. It localises to the perinuclear region. The protein localises to the cytoskeleton. The catalysed reaction is L-seryl-[protein] + ATP = O-phospho-L-seryl-[protein] + ADP + H(+). The enzyme catalyses L-threonyl-[protein] + ATP = O-phospho-L-threonyl-[protein] + ADP + H(+). Its activity is regulated as follows. Cell cycle-regulated, with maximal activity in the S-phase. Rapidly and transiently inhibited by phosphorylation following the generation of DNA double-stranded breaks during S-phase, probably by CHEK1, possibly at Ser-696. This inhibition is cell cycle checkpoint- and ATM-dependent. Functionally, serine/threonine-protein kinase involved in the process of chromatin assembly and probably also DNA replication, transcription, repair, and chromosome segregation. Phosphorylates the chromatin assembly factors ASF1A and ASF1B. Phosphorylation of ASF1A prevents its proteasome-mediated degradation, thereby enhancing chromatin assembly. Negative regulator of amino acid starvation-induced autophagy. Testis-specific isoforms may play a role in spermatogenesis. Highly expressed in embryos throughout development. In Mus musculus (Mouse), this protein is Serine/threonine-protein kinase tousled-like 2 (Tlk2).